Consider the following 650-residue polypeptide: Tudor domain-containing protein 3 (650 aa).

The segment at 147–169 (TKTFGGGGNAGSNLNPGAGGSRN) is disordered. One can recognise a UBA domain in the interval 192-232 (LVDEKALRHITEMGFCKDAARQALMDHSNNVEAALNFLLTG). Disordered regions lie at residues 233-271 (SKPK…APST), 286-406 (EDNK…SCNN), and 427-447 (HQNS…DQRY). Composition is skewed to basic and acidic residues over residues 320–337 (TRND…RFQK) and 366–388 (HWME…KDFS). Polar residues predominate over residues 390–406 (PPSNHQNEGSYRKSCNN). A Tudor domain is found at 554–614 (SWRSGDECLA…RPIQAEAWEE (61 aa)). The disordered stretch occupies residues 616–650 (GEFGDSLDFRRGGDGQPRRSTRPTQQFYQPPRARN). A compositionally biased stretch (basic and acidic residues) spans 622–632 (LDFRRGGDGQP).

In terms of assembly, component of mRNA stress granules.

Its subcellular location is the cytoplasm. It is found in the nucleus. Scaffolding protein that specifically recognizes and binds dimethylarginine-containing proteins. Plays a role in the regulation of translation of target mRNAs by binding Arg/Gly-rich motifs (GAR) in dimethylarginine-containing proteins. In nucleus, acts as a coactivator: recognizes and binds asymmetric dimethylation on the core histone tails associated with transcriptional activation (H3R17me2a and H4R3me2a) and recruits proteins at these arginine-methylated loci. In cytoplasm, acts as an antiviral factor that participates in the assembly of stress granules together with G3BP1. The protein is Tudor domain-containing protein 3 (tdrd3) of Xenopus laevis (African clawed frog).